The primary structure comprises 150 residues: Protein Turandot X1/X2 (150 aa).

The first 22 residues, 1 to 22, serve as a signal peptide directing secretion; it reads MRLYIGSLLICVLLGIVPFATA. A disordered region spans residues 127-150; the sequence is REEGQSNHANSPTTSPSRIQKMTK. Positions 132–150 are enriched in polar residues; sequence SNHANSPTTSPSRIQKMTK.

This sequence belongs to the Turandot family.

The protein localises to the secreted. A humoral factor that may play a role in stress tolerance. This chain is Protein Turandot X1/X2, found in Drosophila sechellia (Fruit fly).